A 449-amino-acid chain; its full sequence is Keratin, type I cuticular Ha7 (449 aa).

The tract at residues Met-1–Glu-104 is head. An IF rod domain is found at Glu-104 to Leu-415. The segment at Lys-105 to Arg-139 is coil 1A. The linker 1 stretch occupies residues Ser-140–Asp-150. The interval Tyr-151–Ser-251 is coil 1B. The segment at Gln-252 to Ile-267 is linker 12. The tract at residues Asp-268 to Glu-411 is coil 2. A tail region spans residues Pro-416–Arg-449.

The protein belongs to the intermediate filament family.

In Homo sapiens (Human), this protein is Keratin, type I cuticular Ha7 (KRT37).